Consider the following 6684-residue polypeptide: Replicase polyprotein 1ab (6684 aa).

The CoV Nsp1 globular domain maps to 2–108 (SSKQFKILVN…DFDLKIARTG (107 aa)). Residues 111–349 (AIYVDQYMCG…KSLVACSVKR (239 aa)) form the CoV Nsp2 N-terminal domain. Positions 240, 242, 259, and 260 each coordinate Zn(2+). Positions 240–260 (CPCGSESSGVGDWTGFKTACC) are C4. The 396-residue stretch at 378-773 (NVGLLFKKTP…CNAARNDIEI (396 aa)) folds into the CoV Nsp2 middle domain. Residues 768–879 (RNDIEIGGIP…VQRMYNKMGG (112 aa)) enclose the CoV Nsp2 C-terminal domain. The Ubiquitin-like 1 domain maps to 882 to 983 (KTVSFSEEVD…DGIMISQYDI (102 aa)). Residues 989-1032 (EKSEVSASSEEEEVESVEEDPENEIVEASEGAEGTSSQEEVETV) are disordered. Residues 997–1015 (SEEEEVESVEEDPENEIVE) are compositionally biased toward acidic residues. Residues 1055–1299 (PWAAAVDVQE…FKVEKVEQQP (245 aa)) form the Peptidase C16 1 domain. The active-site For PL1-PRO activity is C1093. The C4-type 1; degenerate zinc-finger motif lies at 1164-1195 (CGCGEKEIVLERAVFKLTPLKESFNYGVCGDC). Active-site for PL1-PRO activity residues include H1244 and D1257. The region spanning 1318–1489 (NDDLILPFYK…TIENFFSCSI (172 aa)) is the Macro domain. Positions 1486-1542 (SCSIPVNVTEDNVNHERVSVSFDKTYGEQLKGTVVIKDKDVTNQLPSAFDVGQKVIK) constitute a Ubiquitin-like 2 domain. Residues 1550–1803 (AHYGFRDAAA…KVAASPKIVQ (254 aa)) form the Peptidase C16 2 domain. Residue C1588 is the For PL2-PRO activity of the active site. 4 residues coordinate Zn(2+): C1667, C1670, C1694, and H1696. A C4-type 2; atypical zinc finger spans residues 1667–1696 (CDKCAKVEKFVGPVVAAPLAIHGTDETCVH). Active-site for PL2-PRO activity residues include H1741 and D1754. A helical transmembrane segment spans residues 1896–1916 (LVLLLIAIYNFFYLFVSIPVV). The tract at residues 1896–2053 (LVLLLIAIYN…LALKHIVFAC (158 aa)) is HD1. The 66-residue stretch at 1905-1970 (NFFYLFVSIP…LQVTWDFKSD (66 aa)) folds into the 3Ecto domain. 2 cysteine pairs are disulfide-bonded: C1921–C1948 and C1939–C1945. 2 helical membrane-spanning segments follow: residues 1995–2015 (CFLMYFVSQYLNLWLSYFGYV) and 2033–2053 (FVIVVIVVKAVLALKHIVFAC). Positions 2044-2134 (LALKHIVFAC…SVKQTVYATD (91 aa)) are Y1. The region spanning 2044–2384 (LALKHIVFAC…PYERFTESVS (341 aa)) is the CoV Nsp3 Y domain. Residues H2048, C2053, C2058, C2061, C2094, H2097, C2101, and C2104 each contribute to the Zn(2+) site. The ZF1 stretch occupies residues 2048–2061 (HIVFACSNPSCKTC). The segment at 2094–2104 (CKKHNFYCKNC) is ZF2. The Y2 stretch occupies residues 2135-2224 (RSHQEVTKVE…IVNSDLLEDL (90 aa)). The interval 2135-2384 (RSHQEVTKVE…PYERFTESVS (250 aa)) is coV-Y. Positions 2225–2281 (SVDFKGALFNAKKNVIKNSFNVDVSECKNLDECYRACNLNVSFSTFEMAVNNAHRFG) are Y3. Residues 2282–2384 (ILITDRSFNN…PYERFTESVS (103 aa)) are Y4. A run of 8 helical transmembrane segments spans residues 2401-2421 (IVILVFVFIFICGLCSVYSVA), 2467-2487 (YGFIPTFGKSCPIVVGTVFDL), 2497-2517 (PAYVSIVGRSLVFAINAAFGV), 2538-2558 (CVFNTACTTLTGLGGTIVYCA), 2666-2686 (GAMLVNIIIACLAIAMCYGVL), 2695-2715 (CTFLIVMIIVTLVVNNVSYFV), 2721-2741 (FMIIYAIVYYFITRKLAYPGI), and 2746-2766 (FIIAYINMAPWYVITAYILVF). Residues 2401-2766 (IVILVFVFIF…YVITAYILVF (366 aa)) form an HD2 region. One can recognise a Nsp4C domain in the interval 2783-2878 (LFEGDKFVGN…PTVSVNSTLQ (96 aa)). The Peptidase C30 domain maps to 2879–3180 (SGLRKMAQPS…IRQMYGVNLQ (302 aa)). Residues H2919 and C3022 each act as for 3CL-PRO activity in the active site. 8 helical membrane passes run 3187–3207 (FFYPIMTAMTILFAFWLEFFM), 3217–3237 (TFVSIVLAVTTLISTVFVSGI), 3242–3262 (LFFMSFVLPSVILVTAHNLFW), 3280–3300 (MFLPVDMQGVMLTVFCFIVFV), 3313–3333 (WFSLAVTTILVIFNMVKIFGT), 3347–3367 (FVNMLTMIVSLTTKDWMVVIA), 3371–3391 (IAYYIVVCVMPSAFVSDFGFM), and 3394–3414 (ISIVYMACGYLFCCYYGILYW). Residues 3187-3414 (FFYPIMTAMT…FCCYYGILYW (228 aa)) form an HD3 region. Residues 3475–3557 (SKLTEMKCTN…SYFENTTILQ (83 aa)) form the RdRp Nsp7 cofactor domain. The 195-residue stretch at 3558 to 3752 (SVASAYAALP…ITCERTTKLQ (195 aa)) folds into the RdRp Nsp8 cofactor domain. One can recognise a Nsp9 ssRNA-binding domain in the interval 3753-3863 (NNEIMPGKLK…GYIGATVRLQ (111 aa)). An ExoN/MTase coactivator domain is found at 3864–4004 (AGKPTEHPSN…TSMQSFTVDQ (141 aa)). Zn(2+) contacts are provided by C3937, C3940, H3946, C3953, C3979, C3982, C3990, and C3992. 2 zinc fingers span residues 3937-3953 (CIYCRCHVEHPAIDGLC) and 3979-3992 (CVVCGCWLNNGCMC). One can recognise a NiRAN domain in the interval 4006–4255 (YLNRVRGSSA…ESENFVKSDI (250 aa)). The Nsp12 Interface domain occupies 4261–4359 (KQYDLLAYDF…WNLDVKLDTM (99 aa)). Zn(2+) is bound by residues H4290, C4296, C4301, C4305, and C4482. Residues 4360–4927 (KLSMTDLLRF…SLYEKSTVLQ (568 aa)) form the Nsp12 RNA-dependent RNA polymerase domain. The interval 4362 to 4576 (SMTDLLRFVT…HQKHLKSIAA (215 aa)) is rdRp Fingers N-ter. The rdRp Palm N-ter stretch occupies residues 4577-4615 (TRNATVVIGSTKFYGGWDNMLKNLMRDVDNGCLMGWDYP). Residues 4607 to 4769 (GCLMGWDYPK…CYNKDYADLG (163 aa)) form the RdRp catalytic domain. The segment at 4616 to 4674 (KCDRALPNMIRMASAMILGSKHVGCCTHNDRFYRLSNELAQVLTEVVHCTGGFYFKPGG) is rdRp Fingers C-ter. Residues H4637, C4640, and C4641 each coordinate Zn(2+). The rdRp Palm C-ter stretch occupies residues 4675–4810 (TTSGDGTTAY…SVGPHEFCSQ (136 aa)). Active-site residues include S4754, D4755, and D4756. Residues 4811–4927 (HTLQIVGPDG…SLYEKSTVLQ (117 aa)) form a rdRp Thumb region. Positions 4928 to 5040 (AAGMCVVCGS…EDFNKLAVSD (113 aa)) constitute a CV ZBD domain. Zn(2+) is bound by residues C4932, C4935, C4943, C4946, C4953, C4956, H4960, H4966, C4977, C4982, C4999, and H5002. In terms of domain architecture, (+)RNA virus helicase ATP-binding spans 5175-5366 (NTISKLYPVF…MCTLGPDVFL (192 aa)). 5210–5217 (GPPGSGKS) is an ATP binding site. One can recognise a (+)RNA virus helicase C-terminal domain in the interval 5367–5536 (HKCYRCPAEI…AKPETCGLFK (170 aa)). The region spanning 5598–5812 (LFCTRDFAMR…RCLAIHDCFV (215 aa)) is the ExoN domain. Active-site residues include D5616, E5618, and E5717. 7 residues coordinate Zn(2+): C5733, C5735, C5751, H5754, H5782, C5786, and H5789. Catalysis depends on residues H5793 and D5798. C5804 lines the Zn(2+) pocket. Residues 5821–6042 (YPFIDNEEKI…MLWHGFVNSK (222 aa)) enclose the N7-MTase domain. Position 5856 to 5862 (5856 to 5862 (DVGNPKG)) interacts with S-adenosyl-L-methionine. A gpppA-binding region spans residues 5933-5947 (CNGGALYVNNHAFHT). 4 residues coordinate Zn(2+): C5971, C5988, C5999, and H6002. Residues 6046-6106 (SLENVAFNVV…NVAFELYAKR (61 aa)) form the Nsp15 N-terminal oligomerization domain. Positions 6107 to 6224 (KLGLTPPLTI…IYVRKNGEYV (118 aa)) constitute an AV-Nsp11N/CoV-Nsp15M domain. Residues 6241-6381 (KPRSTMEEDF…ENSHIKTFYP (141 aa)) enclose the NendoU domain. Residues H6271, H6286, K6327, K6429, D6513, K6553, and E6586 contribute to the active site. Residues 6385–6681 (SAEWNPGYSM…KLLNFGNHFV (297 aa)) form the Nidovirus-type SAM-dependent 2'-O-MTase domain.

Belongs to the coronaviruses polyprotein 1ab family. In terms of assembly, 3CL-PRO exists as monomer and homodimer. Eight copies of nsp7 and eight copies of nsp8 assemble to form a heterohexadecamer. Nsp9 is a dimer. Nsp10 forms a dodecamer. The cofactor is Mn(2+). In terms of processing, specific enzymatic cleavages in vivo by its own proteases yield mature proteins. 3CL-PRO is autocatalytically processed.

Its subcellular location is the host membrane. It is found in the host cytoplasm. It localises to the host perinuclear region. The protein localises to the host endoplasmic reticulum-Golgi intermediate compartment. The enzyme catalyses Thiol-dependent hydrolysis of ester, thioester, amide, peptide and isopeptide bonds formed by the C-terminal Gly of ubiquitin (a 76-residue protein attached to proteins as an intracellular targeting signal).. The catalysed reaction is RNA(n) + a ribonucleoside 5'-triphosphate = RNA(n+1) + diphosphate. It carries out the reaction ATP + H2O = ADP + phosphate + H(+). It catalyses the reaction a 5'-end diphospho-ribonucleoside in mRNA + GTP + H(+) = a 5'-end (5'-triphosphoguanosine)-ribonucleoside in mRNA + diphosphate. The enzyme catalyses a 5'-end (N(7)-methyl 5'-triphosphoguanosine)-ribonucleoside in mRNA + S-adenosyl-L-methionine = a 5'-end (N(7)-methyl 5'-triphosphoguanosine)-(2'-O-methyl-ribonucleoside) in mRNA + S-adenosyl-L-homocysteine + H(+). The catalysed reaction is uridylyl-uridylyl-ribonucleotide-RNA = a 3'-end uridylyl-2',3'-cyclophospho-uridine-RNA + a 5'-end dephospho-ribonucleoside-RNA. In terms of biological role, the replicase polyprotein of coronaviruses is a multifunctional protein: it contains the activities necessary for the transcription of negative stranded RNA, leader RNA, subgenomic mRNAs and progeny virion RNA as well as proteinases responsible for the cleavage of the polyprotein into functional products. Functionally, non-structural protein 1 inhibits host translation. By suppressing host gene expression, nsp1 facilitates efficient viral gene expression in infected cells and evasion from host immune response. Its function is as follows. The papain-like proteinase 1 (PLP1) and papain-like proteinase 2 (PLP2) are responsible for the cleavages located at the N-terminus of the replicase polyprotein. In addition, PLP2 possesses a deubiquitinating/deISGylating activity and processes both 'Lys-48'- and 'Lys-63'-linked polyubiquitin chains from cellular substrates. PLP2 also antagonizes innate immune induction of type I interferon by blocking the nuclear translocation of host IRF-3. Responsible for the majority of cleavages as it cleaves the C-terminus of replicase polyprotein at 11 sites. Recognizes substrates containing the core sequence [ILMVF]-Q-|-[SAGC]. Inhibited by the substrate-analog Cbz-Val-Asn-Ser-Thr-Leu-Gln-CMK. In terms of biological role, the helicase which contains a zinc finger structure displays RNA and DNA duplex-unwinding activities with 5' to 3' polarity. ATPase activity is strongly stimulated by poly(U), poly(dT), poly(C), poly(dA), but not by poly(G). Functionally, the exoribonuclease acts on both ssRNA and dsRNA in a 3' to 5' direction. Its function is as follows. Nsp7-nsp8 hexadecamer may possibly confer processivity to the polymerase, maybe by binding to dsRNA or by producing primers utilized by the latter. Forms a primer, NSP9-pU, which is utilized by the polymerase for the initiation of RNA chains. Interacts with ribosome signal recognition particle RNA (SRP). Together with NSP8, suppress protein integration into the cell membrane, thereby disrupting host immune defenses. In terms of biological role, RNA-directed RNA polymerase that catalyzes the transcription of viral genomic and subgenomic RNAs. Acts in complex with nsp7 and nsp8 to transcribe both the minus and positive strands of genomic RNA. The kinase-like NiRAN domain of NSP12 attaches one or more nucleotides to the amino terminus of NSP9, forming a covalent RNA-protein intermediate that serves as transcription/replication primer. Subgenomic RNAs (sgRNAs) are formed by discontinuous transcription: The polymerase has the ability to pause at transcription-regulating sequences (TRS) and jump to the leader TRS, resulting in a major deletion. This creates a series of subgenomic RNAs that are replicated, transcribed and translated. In addition, Nsp12 is a subunit of the viral RNA capping enzyme that catalyzes the RNA guanylyltransferase reaction for genomic and sub-genomic RNAs. Subsequently, the NiRAN domain transfers RNA to GDP, and forms the core cap structure GpppA-RNA. Functionally, plays a role in viral transcription/replication and prevents the simultaneous activation of host cell dsRNA sensors, such as MDA5/IFIH1, OAS, and PKR. Acts by degrading the 5'-polyuridines generated during replication of the poly(A) region of viral genomic and subgenomic RNAs. Catalyzes a two-step reaction in which a 2'3'-cyclic phosphate (2'3'-cP) is first generated by 2'-O transesterification, which is then hydrolyzed to a 3'-phosphate (3'-P). If not degraded, poly(U) RNA would hybridize with poly(A) RNA tails and activate host dsRNA sensors. This is Replicase polyprotein 1ab (rep) from Sus scrofa (Pig).